The chain runs to 510 residues: MATIDSMNKDTTRLSDGPDWTFDLLDVYLAEIDRVAKLYRLDTYPHQIEVITSEQMMDAYSSVGMPINYPHWSFGKKFIETERLYKHGQQGLAYEIVINSNPCIAYLMEENTITMQALVMAHACYGHNSFFKNNYLFRSWTDASSIVDYLIFARKYITECEERYGVDEVERLLDSCHALMNYGVDRYKRPQKISLQEEKARQKSREEYLQSQVNMLWRTLPKREEEKTVAEARRYPSEPQENLLYFMEKNAPLLESWQREILRIVRKVSQYFYPQKQTQVMNEGWATFWHYTILNHLYDEGKVTERFMLEFLHSHTNVVFQPPYNSPWYSGINPYALGFAMFQDIKRICQSPTEEDKYWFPDIAGSDWLETLHFAMRDFKDESFISQFLSPKVMRDFRFFTVLDDDRHNYLEISAIHNEEGYREIRNRLSSQYNLSNLEPNIQIWNVDLRGDRSLTLRYIPHNRAPLDRGRKEVLKHVHRLWGFDVMLEQQNEDGSIELLERCPPRMGNL.

This sequence to B.subtilis SpoVR.

This is an uncharacterized protein from Escherichia coli (strain K12).